The following is a 688-amino-acid chain: Glycine--tRNA ligase beta subunit (688 aa).

Belongs to the class-II aminoacyl-tRNA synthetase family. In terms of assembly, tetramer of two alpha and two beta subunits.

It is found in the cytoplasm. It catalyses the reaction tRNA(Gly) + glycine + ATP = glycyl-tRNA(Gly) + AMP + diphosphate. In Listeria welshimeri serovar 6b (strain ATCC 35897 / DSM 20650 / CCUG 15529 / CIP 8149 / NCTC 11857 / SLCC 5334 / V8), this protein is Glycine--tRNA ligase beta subunit.